The following is a 353-amino-acid chain: 3-ketosteroid-9-alpha-monooxygenase, ferredoxin reductase component (353 aa).

Positions 8-117 constitute an FAD-binding FR-type domain; it reads SHVLELQVAE…LAPSGTFVPK (110 aa). The 90-residue stretch at 264–353 folds into the 2Fe-2S ferredoxin-type domain; sequence ATAVVTLDGT…SDSVEVTYDE (90 aa). [2Fe-2S] cluster contacts are provided by Cys300, Cys305, Cys308, and Cys338.

In terms of assembly, monomer. The two-component system 3-ketosteroid-9-alpha-monooxygenase is composed of an oxygenase component KshA and a reductase component KshB. It depends on FAD as a cofactor. Requires [2Fe-2S] cluster as cofactor.

It carries out the reaction androsta-1,4-diene-3,17-dione + 2 reduced [2Fe-2S]-[ferredoxin] + O2 + 2 H(+) = 9alpha-hydroxyandrosta-1,4-diene-3,17-dione + 2 oxidized [2Fe-2S]-[ferredoxin] + H2O. It functions in the pathway lipid metabolism; steroid biosynthesis. In terms of biological role, involved in the degradation of cholesterol. Catalyzes the introduction of a 9a-hydroxyl moiety into 1,4-androstadiene-3,17-dione (ADD) to yield the 9alpha-hydroxy-1,4-androstadiene-3,17-dione (9OHADD) intermediate which spontaneously form 3-hydroxy-9,10-seconandrost-1,3,5(10)-triene-9,17-dione (HSA) via the meta-cleavage of ring B with concomitant aromatization of ring A. The chain is 3-ketosteroid-9-alpha-monooxygenase, ferredoxin reductase component (kshB) from Mycolicibacterium smegmatis (strain ATCC 700084 / mc(2)155) (Mycobacterium smegmatis).